The following is a 346-amino-acid chain: Acetylpolyamine amidohydrolase 1 (346 aa).

The active-site Proton donor/acceptor is histidine 161. Residues aspartate 197, histidine 199, and aspartate 286 each contribute to the Zn(2+) site.

The protein belongs to the histone deacetylase family. As to quaternary structure, homodimer. The cofactor is Zn(2+).

It catalyses the reaction N-acetylputrescine + H2O = putrescine + acetate. It carries out the reaction N-acetylcadaverine + H2O = cadaverine + acetate. The catalysed reaction is N(1)-acetylspermine + H2O = spermine + acetate. The enzyme catalyses N(1)-acetylspermidine + H2O = spermidine + acetate. The protein operates within amine and polyamine metabolism. Functionally, catalyzes the deacetylation of acetylated polyamines such as N-acetylputrescine, N-acetylcadaverine, N(1)-acetylspermine and N(1)-acetylspermidine. Plays an important role in the metabolism of acetylated polyamines in P.aeruginosa. Is involved in the degradation pathways of N-acetylputrescine and N-acetylcadaverine, that allow P.aeruginosa to utilize these acetylpolyamines as a carbon source under glucose starvation. In vitro, can also hydrolyze artificial trifluoroacetylated and acetylated lysine-derivatives. The polypeptide is Acetylpolyamine amidohydrolase 1 (Pseudomonas aeruginosa (strain ATCC 15692 / DSM 22644 / CIP 104116 / JCM 14847 / LMG 12228 / 1C / PRS 101 / PAO1)).